We begin with the raw amino-acid sequence, 334 residues long: N-acetyl-gamma-glutamyl-phosphate reductase (334 aa).

The active site involves cysteine 154.

This sequence belongs to the NAGSA dehydrogenase family. Type 1 subfamily.

The protein resides in the cytoplasm. It carries out the reaction N-acetyl-L-glutamate 5-semialdehyde + phosphate + NADP(+) = N-acetyl-L-glutamyl 5-phosphate + NADPH + H(+). It functions in the pathway amino-acid biosynthesis; L-arginine biosynthesis; N(2)-acetyl-L-ornithine from L-glutamate: step 3/4. Functionally, catalyzes the NADPH-dependent reduction of N-acetyl-5-glutamyl phosphate to yield N-acetyl-L-glutamate 5-semialdehyde. The protein is N-acetyl-gamma-glutamyl-phosphate reductase of Buchnera aphidicola subsp. Schizaphis graminum (strain Sg).